The primary structure comprises 458 residues: Argininosuccinate lyase (458 aa).

Belongs to the lyase 1 family. Argininosuccinate lyase subfamily.

Its subcellular location is the cytoplasm. It carries out the reaction 2-(N(omega)-L-arginino)succinate = fumarate + L-arginine. Its pathway is amino-acid biosynthesis; L-arginine biosynthesis; L-arginine from L-ornithine and carbamoyl phosphate: step 3/3. This is Argininosuccinate lyase from Glaesserella parasuis serovar 5 (strain SH0165) (Haemophilus parasuis).